The chain runs to 444 residues: Phosphomethylpyrimidine synthase (444 aa).

Substrate contacts are provided by residues Asn-80, Met-109, Tyr-138, His-174, 194–196, 235–238, and Glu-274; these read SRG and DSLR. His-278 is a Zn(2+) binding site. Tyr-301 provides a ligand contact to substrate. Residue His-342 coordinates Zn(2+). Residues Cys-422, Cys-425, and Cys-430 each coordinate [4Fe-4S] cluster.

The protein belongs to the ThiC family. In terms of assembly, homodimer. Requires [4Fe-4S] cluster as cofactor.

The catalysed reaction is 5-amino-1-(5-phospho-beta-D-ribosyl)imidazole + S-adenosyl-L-methionine = 4-amino-2-methyl-5-(phosphooxymethyl)pyrimidine + CO + 5'-deoxyadenosine + formate + L-methionine + 3 H(+). Its pathway is cofactor biosynthesis; thiamine diphosphate biosynthesis. Functionally, catalyzes the synthesis of the hydroxymethylpyrimidine phosphate (HMP-P) moiety of thiamine from aminoimidazole ribotide (AIR) in a radical S-adenosyl-L-methionine (SAM)-dependent reaction. The chain is Phosphomethylpyrimidine synthase from Nitratiruptor sp. (strain SB155-2).